The chain runs to 161 residues: MMSTMSIKEGLLVILLSLFLFDTTALIHRREIPHMESKGQMQRGQVLLGGWQERSPEDNEILELLPSVLTKVNQQSNDEYHLMPIKLLNVSSQVVAGVKYKMEVQVARSECKKSASEQVNLKTCKKLEGHPDQVMTLEVWEKPWEDFLQVNILETKVLSSV.

An N-terminal signal peptide occupies residues 1–25 (MMSTMSIKEGLLVILLSLFLFDTTA). Residues 76 to 78 (SND) carry the Important for interaction with host LGMN motif. N-linked (GlcNAc...) asparagine glycosylation is present at Asn-89. Residues 93-97 (QVVAG) carry the Secondary area of contact motif. An intrachain disulfide couples Cys-111 to Cys-124.

It belongs to the cystatin family.

Functionally, cysteine protease inhibitor which inhibits members of the peptidase C1 family. Also acts as an asparaginyl endopeptidase inhibitor. In the human host, inhibits CTSL/cathepsin L, CTSS/cathepsin S, CTSB/cathepsin B and asparaginyl endopeptidase LGMN/AEP which may cause defects in both antigen and MHC class II invariant chain CD74/Ii processing. The polypeptide is Cystatin cpi-2 (Brugia malayi (Filarial nematode worm)).